Consider the following 121-residue polypeptide: Flagellar protein FliT (121 aa).

A required for homodimerization region spans residues 1-50 (MNNAPHLYFAWQQLVEKSQLMLRLATEEQWDELITSEMAYVNAVQEIAHL). Residues 60–98 (MQEQLRPMLRLILDNESKVKQLLQIRMDELAKLVGQSSV) are fliD binding.

Belongs to the FliT family. Homodimer. Interacts with FliD and FlhC.

The protein localises to the cytoplasm. Its subcellular location is the cytosol. Its function is as follows. Dual-function protein that regulates the transcription of class 2 flagellar operons and that also acts as an export chaperone for the filament-capping protein FliD. As a transcriptional regulator, acts as an anti-FlhDC factor; it directly binds FlhC, thus inhibiting the binding of the FlhC/FlhD complex to class 2 promoters, resulting in decreased expression of class 2 flagellar operons. As a chaperone, effects FliD transition to the membrane by preventing its premature polymerization, and by directing it to the export apparatus. This chain is Flagellar protein FliT, found in Escherichia coli (strain 55989 / EAEC).